Consider the following 282-residue polypeptide: V-set domain-containing T-cell activation inhibitor 1 (282 aa).

The signal sequence occupies residues 1 to 24 (MASLGQILFWSIISIIIILAGAIA). Topologically, residues 25 to 259 (LIIGFGISGR…HLQLLNSKAS (235 aa)) are extracellular. 2 Ig-like V-type domains span residues 35–146 (HSIT…LEYK) and 153–241 (PEVN…IKVT). Intrachain disulfides connect cysteine 56–cysteine 130 and cysteine 168–cysteine 225. Asparagine 216 carries an N-linked (GlcNAc...) asparagine glycan. A helical transmembrane segment spans residues 260-280 (LCVSSFFAISWALLPLSPYLM). At 281 to 282 (LK) the chain is on the cytoplasmic side.

This sequence belongs to the immunoglobulin superfamily. BTN/MOG family. Post-translationally, N-glycosylated. In terms of tissue distribution, overexpressed in breast, ovarian, endometrial, renal cell (RCC) and non-small-cell lung cancers (NSCLC). Expressed on activated T- and B-cells, monocytes and dendritic cells, but not expressed in most normal tissues (at protein level). Widely expressed, including in kidney, liver, lung, ovary, placenta, spleen and testis.

It is found in the cell membrane. Negatively regulates T-cell-mediated immune response by inhibiting T-cell activation, proliferation, cytokine production and development of cytotoxicity. When expressed on the cell surface of tumor macrophages, plays an important role, together with regulatory T-cells (Treg), in the suppression of tumor-associated antigen-specific T-cell immunity. Involved in promoting epithelial cell transformation. The sequence is that of V-set domain-containing T-cell activation inhibitor 1 from Homo sapiens (Human).